The sequence spans 91 residues: Small ribosomal subunit protein uS19 (91 aa).

It belongs to the universal ribosomal protein uS19 family.

Protein S19 forms a complex with S13 that binds strongly to the 16S ribosomal RNA. This is Small ribosomal subunit protein uS19 from Aliarcobacter butzleri (strain RM4018) (Arcobacter butzleri).